A 149-amino-acid chain; its full sequence is UPF0756 membrane protein Nther_1957 (149 aa).

4 helical membrane passes run 5–25, 52–72, 85–105, and 111–131; these read IVVL…LVAT, LGIL…DIMP, LIAV…VELL, and VMVG…GVPA.

Belongs to the UPF0756 family.

The protein localises to the cell membrane. This chain is UPF0756 membrane protein Nther_1957, found in Natranaerobius thermophilus (strain ATCC BAA-1301 / DSM 18059 / JW/NM-WN-LF).